Here is a 655-residue protein sequence, read N- to C-terminus: MLNIIVVLLLLFFSNNVIDSRYISYSKPNYYKTNDKIPVYMNNVRSGLSIFDYYKYPFPKPSTIEYKQSFMSKLAGDLNSTSLYDEVSLHTSVDCIALGKPINYTLDDVNQLKYLIDKHFRINFFIDDLPIGELFKNNRLVEYNNSNSKSSEITSPPSSPSSSSSSSSSPSSSIEEEDDDDTENDHIYLGHPIGFKYNSKYYLYNHLIIIINSTSTKSDKGFYTIKSVNVEPYSCVDCKIDSGIGGVEISPELFDDDKIKQLTIQYTYSIRNHETTTTNSGKSFQSWSIYYVNQFKLSNIDIIMSFIIVLAVSACLAIILLKIFRKTNSKTYTQLSPDDGGWKSIYADVFRSPNNFMTFSIIIGFGVQIVASLFILMVFSVAGLTSIATPGGMAIASILIFSFTGIFNGYSSMRTYIMLGGTRKLYNSVITTTLIPFTILLLMFIGYFQVWSNKFTYGASIGTVFFILAMWLLVCVPCSLLSSYFVRTWPPAEYPVRINPIPRFIPTAKWYQNQYLHMILGGIIPFVIIFTDLSFFLSSWVLGEHYSYSLSFALTFILMIISIVETNMIIEYYQLSLENYNWWWRSLLGPMVTGLYTFIYFIYFGITRIETEGVGFYYFMFSLVFSILVSLFCSSIGFLGNLWFTKKIYSTLHFD.

Positions 1 to 20 are cleaved as a signal peptide; it reads MLNIIVVLLLLFFSNNVIDS. Over residues 146-173 the composition is skewed to low complexity; that stretch reads SNSKSSEITSPPSSPSSSSSSSSSPSSS. The interval 146–185 is disordered; it reads SNSKSSEITSPPSSPSSSSSSSSSPSSSIEEEDDDDTEND. Positions 174–183 are enriched in acidic residues; the sequence is IEEEDDDDTE. 9 helical membrane passes run 300–320, 359–379, 387–407, 428–448, 461–481, 518–538, 550–570, 587–607, and 619–639; these read IDIIMSFIIVLAVSACLAIIL, FSIIIGFGVQIVASLFILMVF, IATPGGMAIASILIFSFTGIF, SVITTTLIPFTILLLMFIGYF, IGTVFFILAMWLLVCVPCSLL, MILGGIIPFVIIFTDLSFFLS, LSFALTFILMIISIVETNMII, LLGPMVTGLYTFIYFIYFGIT, and FMFSLVFSILVSLFCSSIGFL.

The protein belongs to the nonaspanin (TM9SF) (TC 9.A.2) family.

It localises to the membrane. The protein is Putative phagocytic receptor 1c (phg1c) of Dictyostelium discoideum (Social amoeba).